Consider the following 318-residue polypeptide: MDIKKLPKEIIEGRRLKREEDLRFFATANLEELCQGADNIRKVLCGDAVNLCSIINGKSGKCSENCKFCAQSSHHHTGIEEYSFLDTNLIVEDCKKHANKGVHRYSIVTAGRELKGKDLQVACDAYKRMKEECDIDLCASHGLLSEEAFIALKESGVSMYHENIETSKRNFPNICTTHTYKDKINAIKLAQRLGFKVCSGGIIGMGETFEDRLDMAVSLAELKIQSIPINTLMPIKGTTYEDLEPLTEDEILRTVAMFRFINPTANIRLAAGRSLMEDSGRRAFHAGANATITGDLLTTSGNNIDKDKEMLTQMGFHL.

Residues 44-270 (LCGDAVNLCS…INPTANIRLA (227 aa)) form the Radical SAM core domain. [4Fe-4S] cluster is bound by residues cysteine 62, cysteine 66, and cysteine 69. [2Fe-2S] cluster contacts are provided by serine 106, cysteine 138, cysteine 198, and arginine 268.

Belongs to the radical SAM superfamily. Biotin synthase family. Homodimer. The cofactor is [4Fe-4S] cluster. It depends on [2Fe-2S] cluster as a cofactor.

The catalysed reaction is (4R,5S)-dethiobiotin + (sulfur carrier)-SH + 2 reduced [2Fe-2S]-[ferredoxin] + 2 S-adenosyl-L-methionine = (sulfur carrier)-H + biotin + 2 5'-deoxyadenosine + 2 L-methionine + 2 oxidized [2Fe-2S]-[ferredoxin]. It participates in cofactor biosynthesis; biotin biosynthesis; biotin from 7,8-diaminononanoate: step 2/2. In terms of biological role, catalyzes the conversion of dethiobiotin (DTB) to biotin by the insertion of a sulfur atom into dethiobiotin via a radical-based mechanism. This chain is Biotin synthase, found in Alkaliphilus metalliredigens (strain QYMF).